Here is a 394-residue protein sequence, read N- to C-terminus: Aspergillopepsin-1 (394 aa).

The signal sequence occupies residues 1–20 (MVVFSKTAALVLGLSTAVSA). The propeptide at 21–69 (APAPTRKGFTINQIARPANKTRTVNLPGLYARSLAKFGGTVPQSVKEAA) is activation peptide. Positions 85–391 (YLTPVTVGKS…NSEGPKLGFA (307 aa)) constitute a Peptidase A1 domain. Residues Asp101 and Asp283 contribute to the active site. An intrachain disulfide couples Cys319 to Cys354.

This sequence belongs to the peptidase A1 family.

Its subcellular location is the secreted. It carries out the reaction Hydrolysis of proteins with broad specificity. Generally favors hydrophobic residues in P1 and P1', but also accepts Lys in P1, which leads to activation of trypsinogen. Does not clot milk.. Functionally, secreted aspartic endopeptidase that allows assimilation of proteinaceous substrates. The scissile peptide bond is attacked by a nucleophilic water molecule activated by two aspartic residues in the active site. Shows a broad primary substrate specificity. Favors hydrophobic residues at the P1 and P1' positions, but also accepts a lysine residue in the P1 position, leading to the activation of trypsinogen and chymotrypsinogen A. This Aspergillus niger protein is Aspergillopepsin-1.